The following is a 470-amino-acid chain: Neuraminidase (470 aa).

The Intravirion segment spans residues Met1 to Ala14. Residues Ser11–Ile33 are involved in apical transport and lipid raft association. A helical membrane pass occupies residues Leu15–Leu35. The tract at residues His36–Thr89 is hypervariable stalk region. Over His36–Leu470 the chain is Virion surface. N-linked (GlcNAc...) asparagine; by host glycans are attached at residues Asn42, Asn52, Asn63, Asn66, and Asn87. Residues Leu92–Leu470 are head of neuraminidase. Cystine bridges form between Cys93-Cys419, Cys125-Cys130, Cys177-Cys195, Cys185-Cys232, Cys234-Cys239, Cys280-Cys293, Cys282-Cys291, Cys320-Cys338, and Cys423-Cys449. Arg119 contacts substrate. Asn147 is a glycosylation site (N-linked (GlcNAc...) asparagine; by host). Residue Asp152 is the Proton donor/acceptor of the active site. Arg153 contacts substrate. Residue Asn202 is glycosylated (N-linked (GlcNAc...) asparagine; by host). Residue Glu278–Glu279 coordinates substrate. Arg294 is a binding site for substrate. Positions 295, 299, 326, and 348 each coordinate Ca(2+). Arg372 provides a ligand contact to substrate. The Nucleophile role is filled by Tyr406.

It belongs to the glycosyl hydrolase 34 family. In terms of assembly, homotetramer. The cofactor is Ca(2+). N-glycosylated.

It localises to the virion membrane. It is found in the host apical cell membrane. It carries out the reaction Hydrolysis of alpha-(2-&gt;3)-, alpha-(2-&gt;6)-, alpha-(2-&gt;8)- glycosidic linkages of terminal sialic acid residues in oligosaccharides, glycoproteins, glycolipids, colominic acid and synthetic substrates.. With respect to regulation, inhibited by the neuraminidase inhibitors zanamivir (Relenza) and oseltamivir (Tamiflu). These drugs interfere with the release of progeny virus from infected cells and are effective against all influenza strains. Resistance to neuraminidase inhibitors is quite rare. Functionally, catalyzes the removal of terminal sialic acid residues from viral and cellular glycoconjugates. Cleaves off the terminal sialic acids on the glycosylated HA during virus budding to facilitate virus release. Additionally helps virus spread through the circulation by further removing sialic acids from the cell surface. These cleavages prevent self-aggregation and ensure the efficient spread of the progeny virus from cell to cell. Otherwise, infection would be limited to one round of replication. Described as a receptor-destroying enzyme because it cleaves a terminal sialic acid from the cellular receptors. May facilitate viral invasion of the upper airways by cleaving the sialic acid moieties on the mucin of the airway epithelial cells. Likely to plays a role in the budding process through its association with lipid rafts during intracellular transport. May additionally display a raft-association independent effect on budding. Plays a role in the determination of host range restriction on replication and virulence. Sialidase activity in late endosome/lysosome traffic seems to enhance virus replication. The chain is Neuraminidase from Aves.